A 308-amino-acid chain; its full sequence is Cytochrome b (308 aa).

4 consecutive transmembrane segments (helical) span residues 1–21 (FGSL…LLAM), 45–66 (WLIR…YFHI), 81–101 (WNIG…GYVL), and 146–166 (FFAL…VHLT). His51 and His65 together coordinate heme b. 2 residues coordinate heme b: His150 and His164. A ubiquinone is bound at residue His169. A run of 3 helical transmembrane segments spans residues 194–214 (TKDI…ALFS), 256–276 (LGGV…PLLH), and 288–308 (LSQI…WVGS).

It belongs to the cytochrome b family. The cytochrome bc1 complex contains 11 subunits: 3 respiratory subunits (MT-CYB, CYC1 and UQCRFS1), 2 core proteins (UQCRC1 and UQCRC2) and 6 low-molecular weight proteins (UQCRH/QCR6, UQCRB/QCR7, UQCRQ/QCR8, UQCR10/QCR9, UQCR11/QCR10 and a cleavage product of UQCRFS1). This cytochrome bc1 complex then forms a dimer. Heme b serves as cofactor.

It localises to the mitochondrion inner membrane. In terms of biological role, component of the ubiquinol-cytochrome c reductase complex (complex III or cytochrome b-c1 complex) that is part of the mitochondrial respiratory chain. The b-c1 complex mediates electron transfer from ubiquinol to cytochrome c. Contributes to the generation of a proton gradient across the mitochondrial membrane that is then used for ATP synthesis. This Baeolophus inornatus (Oak titmouse) protein is Cytochrome b (MT-CYB).